The sequence spans 311 residues: MYKQGEPNLWTGRLDSETDPKKFRHFQTVTFEDLSKLEKSSTPSGVGILGYAVDKGVALNKGRIGAKEGPDAIKQAFAGLPDLNQCETLVDYGNVYHDHEELIDTQKEFATLAAKSIVNHRQTFLLGGGHDIAYAQYLATRKVYPTQSIGVINIDAHFDTRAEQQSTSGTSFRQILEEDENTGYLVLGIAQGGNTQSLFDYAKEKKIDYVFADELLSHVSPTIKDMIERFIHEHDVIMFTICMDVIDSAFAPGVSAPAVLGLYPHTVLELAKRIIPSDKVSSVSIAEMNPTYDADNRTAKLVANLVHHFLK.

Mn(2+) contacts are provided by histidine 130, aspartate 155, histidine 157, aspartate 159, cysteine 242, and aspartate 244.

The protein belongs to the arginase family. Mn(2+) is required as a cofactor.

It catalyses the reaction N-formimidoyl-L-glutamate + H2O = formamide + L-glutamate. It functions in the pathway amino-acid degradation; L-histidine degradation into L-glutamate; L-glutamate from N-formimidoyl-L-glutamate (hydrolase route): step 1/1. Functionally, catalyzes the conversion of N-formimidoyl-L-glutamate to L-glutamate and formamide. The protein is Formimidoylglutamase of Staphylococcus aureus (strain MRSA252).